Reading from the N-terminus, the 433-residue chain is Eukaryotic peptide chain release factor subunit 1 (433 aa).

An N5-methylglutamine modification is found at Q182. Position 425 is a phosphoserine (S425).

This sequence belongs to the eukaryotic release factor 1 family. In terms of assembly, component of the eRF1-eRF3-GTP ternary complex, composed of sup45/eRF1, sup35/eRF3 and GTP.

It localises to the cytoplasm. Functionally, component of the eRF1-eRF3-GTP ternary complex, a ternary complex that mediates translation termination in response to the termination codons. The eRF1-eRF3-GTP complex binds to a stop codon in the ribosomal A-site. Sup45/eRF1 is responsible for stop codon recognition and inducing hydrolysis of peptidyl-tRNA. Following GTP hydrolysis by sup35/eRF3, sup35/eRF3 dissociates, permitting sup45/eRF1 to accommodate fully in the A-site. The sequence is that of Eukaryotic peptide chain release factor subunit 1 (sup45) from Schizosaccharomyces pombe (strain 972 / ATCC 24843) (Fission yeast).